We begin with the raw amino-acid sequence, 448 residues long: Velvet complex subunit 2 (448 aa).

Disordered regions lie at residues 1-153 (MNSA…SKIE) and 224-306 (EPGT…NGYG). Residues 15–34 (PGPAYSSSAPPPIHTYQQHQ) are compositionally biased toward low complexity. Pro residues-rich tracts occupy residues 35–44 (HPPPPLPPPS) and 52–61 (PPLPPPPSAP). The span at 96–107 (APYQQSQPSQYP) shows a compositional bias: low complexity. A compositionally biased stretch (pro residues) spans 116–132 (VPPPSQHDEPPPPPSSG). The region spanning 155 to 431 (GSGWKYSLDV…ANQGIKIPIR (277 aa)) is the Velvet domain. The segment covering 260 to 292 (QQSYGPAPSYPPSSSYGPPQQYYPRHSGYSAEP) has biased composition (low complexity).

Belongs to the velvet family. VelB subfamily. In terms of assembly, component of the heterotrimeric velvet complex composed of LAE1, VE1 and VELB; VE1 acting as a bridging protein between LAE1 and VEL2. Interacts with VE1. Forms a heterodimeric complex with VOS1; the formation of the VELB-VOS1 complex is light-dependent.

It is found in the nucleus. The protein localises to the cytoplasm. Component of the velvet transcription factor complex that controls sexual/asexual developmental ratio in response to light, promoting sexual development in the darkness while stimulating asexual sporulation under illumination. The velvet complex acts as a global regulator for secondary metabolite gene expression. Component of the VELB-VOS1 heterodimeric complex that plays a dual role in activating genes associated with spore maturation and repressing certain development-associated genes. The VELB-VOS1 complex binds DNA through the DNA-binding domain of VOS1 that recognizes an 11-nucleotide consensus sequence 5'-CTGGCCGCGGC-3' consisting of two motifs in the promoters of key developmental regulatory genes. Controls the expression of the fumonisins gene cluster. Involved in cell wall integrity, cell surface hydrophobicity, hyphal polarity and conidiation pattern. Involved in oxidative stress resistance by positively regulating the transcription of the catalase-encoding gene CAT2. This chain is Velvet complex subunit 2, found in Gibberella moniliformis (strain M3125 / FGSC 7600) (Maize ear and stalk rot fungus).